The chain runs to 1007 residues: Kinesin-like protein KIN-14F (1007 aa).

In terms of domain architecture, Calponin-homology (CH) spans 41–187 (AARRNEAAGW…CVLALKSYGD (147 aa)). The region spanning 390–715 (SIRVYCRVRP…LKFAERVSTV (326 aa)) is the Kinesin motor domain. Residue 472-479 (GQTGSGKT) participates in ATP binding. A coiled-coil region spans residues 718-748 (GAARLNKESGEVKELKEQIARLKSSLAMKDS). Over residues 885-904 (KQYLRNNSRKKDGNEFEQQR) the composition is skewed to basic and acidic residues. Disordered regions lie at residues 885–924 (KQYL…ATSD) and 944–1007 (SENG…AGTK). Polar residues predominate over residues 963-1001 (TRTPLHSQIPSASRKTSNGNRSGRQPLSGSDSRRLSSNG).

It belongs to the TRAFAC class myosin-kinesin ATPase superfamily. Kinesin family. KIN-14 subfamily.

In Oryza sativa subsp. japonica (Rice), this protein is Kinesin-like protein KIN-14F.